A 239-amino-acid polypeptide reads, in one-letter code: Prolyl hydroxylase EGLN3 (239 aa).

The interval 62-73 (AGPRAGVSKRHL) is beta(2)beta(3) 'finger-like' loop. The interval 88 to 104 (CEAISFLLSLIDRLVLY) is required for interaction with ADRB2. Residues 116–214 (ERSKAMVACY…RYAMTVWYFD (99 aa)) form the Fe2OG dioxygenase domain. Residues His135, Asp137, and His196 each contribute to the Fe cation site. Arg205 provides a ligand contact to 2-oxoglutarate.

As to quaternary structure, interacts with BCL2 (via its BH4 domain); the interaction disrupts the BAX-BCL4 complex inhibiting the anti-apoptotic activity of BCL2. Interacts with WDR83; the interaction leads to almost complete elimination of HIF-mediated reporter activity. Interacts with ADRB2; the interaction hydroxylates ADRB2 facilitating its ubiquitination by the VHL-E3 ligase complex. Interacts with PAX2; the interaction targets PAX2 for destruction. Interacts with PKM; the interaction hydroxylates PKM in hypoxia. Interacts with LIMD1, WTIP and AJUBA. Requires Fe(2+) as cofactor. The cofactor is L-ascorbate. Post-translationally, ubiquitinated by SIAH1 and/or SIAH2 in response to the unfolded protein response (UPR), leading to its degradation. In terms of tissue distribution, widely expressed at low levels. Expressed at higher levels in adult heart (cardiac myocytes, aortic endothelial cells and coronary artery smooth muscle), lung and placenta, and in fetal spleen, heart and skeletal muscle. Also expressed in pancreas. Localized to pancreatic acini and islet cells.

The protein resides in the nucleus. It localises to the cytoplasm. It catalyses the reaction L-prolyl-[protein] + 2-oxoglutarate + O2 = trans-4-hydroxy-L-prolyl-[protein] + succinate + CO2. The catalysed reaction is L-prolyl-[hypoxia-inducible factor alpha subunit] + 2-oxoglutarate + O2 = trans-4-hydroxy-L-prolyl-[hypoxia-inducible factor alpha subunit] + succinate + CO2. With respect to regulation, activated in cardiovascular cells and Hela cells following exposure to hypoxia. Inhibited by polynitrogen compounds probably by chelation to Fe(2+) ions. Functionally, prolyl hydroxylase that mediates hydroxylation of proline residues in target proteins, such as PKM, TELO2, ATF4 and HIF1A. Target proteins are preferentially recognized via a LXXLAP motif. Cellular oxygen sensor that catalyzes, under normoxic conditions, the post-translational formation of 4-hydroxyproline in hypoxia-inducible factor (HIF) alpha proteins. Hydroxylates a specific proline found in each of the oxygen-dependent degradation (ODD) domains (N-terminal, NODD, and C-terminal, CODD) of HIF1A. Also hydroxylates HIF2A. Has a preference for the CODD site for both HIF1A and HIF2A. Hydroxylation on the NODD site by EGLN3 appears to require prior hydroxylation on the CODD site. Hydroxylated HIFs are then targeted for proteasomal degradation via the von Hippel-Lindau ubiquitination complex. Under hypoxic conditions, the hydroxylation reaction is attenuated allowing HIFs to escape degradation resulting in their translocation to the nucleus, heterodimerization with HIF1B, and increased expression of hypoxy-inducible genes. ELGN3 is the most important isozyme in limiting physiological activation of HIFs (particularly HIF2A) in hypoxia. Also hydroxylates PKM in hypoxia, limiting glycolysis. Under normoxia, hydroxylates and regulates the stability of ADRB2. Regulator of cardiomyocyte and neuronal apoptosis. In cardiomyocytes, inhibits the anti-apoptotic effect of BCL2 by disrupting the BAX-BCL2 complex. In neurons, has a NGF-induced proapoptotic effect, probably through regulating CASP3 activity. Also essential for hypoxic regulation of neutrophilic inflammation. Plays a crucial role in DNA damage response (DDR) by hydroxylating TELO2, promoting its interaction with ATR which is required for activation of the ATR/CHK1/p53 pathway. Also mediates hydroxylation of ATF4, leading to decreased protein stability of ATF4. This chain is Prolyl hydroxylase EGLN3, found in Homo sapiens (Human).